The following is a 414-amino-acid chain: Serine/threonine transporter SstT (414 aa).

8 consecutive transmembrane segments (helical) span residues 16–36 (GSLV…AWVS), 46–66 (LGTL…LMLV), 84–104 (ILFL…VFSF), 143–163 (ALLN…GFAL), 180–200 (AVTF…FGLV), 219–239 (LVVL…LLVF), 300–320 (MAGA…TLGV), and 332–352 (VVAS…LLLI).

The protein belongs to the dicarboxylate/amino acid:cation symporter (DAACS) (TC 2.A.23) family.

Its subcellular location is the cell inner membrane. The enzyme catalyses L-serine(in) + Na(+)(in) = L-serine(out) + Na(+)(out). It catalyses the reaction L-threonine(in) + Na(+)(in) = L-threonine(out) + Na(+)(out). Involved in the import of serine and threonine into the cell, with the concomitant import of sodium (symport system). In Salmonella arizonae (strain ATCC BAA-731 / CDC346-86 / RSK2980), this protein is Serine/threonine transporter SstT.